A 466-amino-acid polypeptide reads, in one-letter code: Asparagine--tRNA ligase (466 aa).

The protein belongs to the class-II aminoacyl-tRNA synthetase family. Homodimer.

Its subcellular location is the cytoplasm. The enzyme catalyses tRNA(Asn) + L-asparagine + ATP = L-asparaginyl-tRNA(Asn) + AMP + diphosphate + H(+). The sequence is that of Asparagine--tRNA ligase from Buchnera aphidicola subsp. Schizaphis graminum (strain Sg).